Consider the following 178-residue polypeptide: ATP synthase subunit b, chloroplastic (178 aa).

Residues 23 to 43 (IFETNIINLAAVVAIVISFVG) form a helical membrane-spanning segment.

The protein belongs to the ATPase B chain family. As to quaternary structure, F-type ATPases have 2 components, F(1) - the catalytic core - and F(0) - the membrane proton channel. F(1) has five subunits: alpha(3), beta(3), gamma(1), delta(1), epsilon(1). F(0) has four main subunits: a(1), b(1), b'(1) and c(10-14). The alpha and beta chains form an alternating ring which encloses part of the gamma chain. F(1) is attached to F(0) by a central stalk formed by the gamma and epsilon chains, while a peripheral stalk is formed by the delta, b and b' chains.

Its subcellular location is the plastid. It is found in the chloroplast thylakoid membrane. F(1)F(0) ATP synthase produces ATP from ADP in the presence of a proton or sodium gradient. F-type ATPases consist of two structural domains, F(1) containing the extramembraneous catalytic core and F(0) containing the membrane proton channel, linked together by a central stalk and a peripheral stalk. During catalysis, ATP synthesis in the catalytic domain of F(1) is coupled via a rotary mechanism of the central stalk subunits to proton translocation. In terms of biological role, component of the F(0) channel, it forms part of the peripheral stalk, linking F(1) to F(0). The protein is ATP synthase subunit b, chloroplastic of Tetradesmus obliquus (Green alga).